We begin with the raw amino-acid sequence, 345 residues long: S-adenosylmethionine:tRNA ribosyltransferase-isomerase (345 aa).

It belongs to the QueA family. In terms of assembly, monomer.

It localises to the cytoplasm. The catalysed reaction is 7-aminomethyl-7-carbaguanosine(34) in tRNA + S-adenosyl-L-methionine = epoxyqueuosine(34) in tRNA + adenine + L-methionine + 2 H(+). The protein operates within tRNA modification; tRNA-queuosine biosynthesis. Functionally, transfers and isomerizes the ribose moiety from AdoMet to the 7-aminomethyl group of 7-deazaguanine (preQ1-tRNA) to give epoxyqueuosine (oQ-tRNA). This Shewanella baltica (strain OS155 / ATCC BAA-1091) protein is S-adenosylmethionine:tRNA ribosyltransferase-isomerase.